The following is a 432-amino-acid chain: Glutamate-1-semialdehyde 2,1-aminomutase (432 aa).

N6-(pyridoxal phosphate)lysine is present on K269.

The protein belongs to the class-III pyridoxal-phosphate-dependent aminotransferase family. HemL subfamily. In terms of assembly, homodimer. Pyridoxal 5'-phosphate is required as a cofactor.

The protein resides in the cytoplasm. The catalysed reaction is (S)-4-amino-5-oxopentanoate = 5-aminolevulinate. It participates in porphyrin-containing compound metabolism; protoporphyrin-IX biosynthesis; 5-aminolevulinate from L-glutamyl-tRNA(Glu): step 2/2. The sequence is that of Glutamate-1-semialdehyde 2,1-aminomutase from Desulforudis audaxviator (strain MP104C).